Consider the following 395-residue polypeptide: Bifunctional fatty acid conjugase/Delta(12)-oleate desaturase (395 aa).

The next 2 membrane-spanning stretches (helical) occupy residues 73–93 (FALA…LPKP) and 97–117 (MAWP…WVIA). Residues 118 to 122 (HECGH) carry the Histidine box-1 motif. Residues 130-150 (WVNDAVGFFLHTSLLVPYFPF) form a helical membrane-spanning segment. A Histidine box-2 motif is present at residues 154–158 (HRRHH). 3 helical membrane-spanning segments follow: residues 192-212 (VLTL…FNAS), 236-256 (FWVH…YRLA), and 264-284 (LLSI…LITF). The short motif at 328–332 (HVIHH) is the Histidine box-3 element.

The protein belongs to the fatty acid desaturase type 1 family.

It is found in the membrane. The enzyme catalyses a (9Z,12Z)-octadecadienoyl-containing glycerolipid + 2 Fe(II)-[cytochrome b5] + O2 + 2 H(+) = a (9Z,11E,13Z)-octadeca-9,11,13-trienoyl-containing glycerolipid + 2 Fe(III)-[cytochrome b5] + 2 H2O. The protein operates within lipid metabolism; polyunsaturated fatty acid biosynthesis. Converts a single cis double bond at position 12 of linoleate incorporated into phosphatidylcholine into conjugated 11-trans and 13-cis double bonds. Produces punicic acid (18:3(9Z,11E,13Z)) from linoleic acid and conjugated octadecatetraenoic fatty acid from gamma-linolenic acid. No activity with cis- and trans-vaccenic acid, alpha-linolenic acid or homo-gamma-linolenic acid. 16:2(9Z,12Z), 18:3(9Z,12Z,15Z) and 18:2(9Z,12Z) are substrates for the conjugase to form trans-Delta(11) and cis-Delta(13) double bonds. No activity on the cis-Delta(9) double bonds of oleic and palmitoleic acids. The chain is Bifunctional fatty acid conjugase/Delta(12)-oleate desaturase from Punica granatum (Pomegranate).